The following is a 208-amino-acid chain: FMN-dependent NADH:quinone oxidoreductase 1 (208 aa).

Ser-10 contributes to the FMN binding site.

It belongs to the azoreductase type 1 family. Homodimer. FMN is required as a cofactor.

The enzyme catalyses 2 a quinone + NADH + H(+) = 2 a 1,4-benzosemiquinone + NAD(+). It catalyses the reaction N,N-dimethyl-1,4-phenylenediamine + anthranilate + 2 NAD(+) = 2-(4-dimethylaminophenyl)diazenylbenzoate + 2 NADH + 2 H(+). In terms of biological role, quinone reductase that provides resistance to thiol-specific stress caused by electrophilic quinones. Contributes to resistance to 2-methylhydroquinone (2-MHQ) and catechol. Also exhibits azoreductase activity. Catalyzes the reductive cleavage of the azo bond in aromatic azo compounds to the corresponding amines. This chain is FMN-dependent NADH:quinone oxidoreductase 1, found in Bacillus subtilis (strain 168).